Consider the following 373-residue polypeptide: Queuine tRNA-ribosyltransferase (373 aa).

Catalysis depends on D90, which acts as the Proton acceptor. Substrate contacts are provided by residues 90 to 94, D144, Q193, and G220; that span reads DSGGF. The segment at 251–257 is RNA binding; that stretch reads GVGTPED. D270 acts as the Nucleophile in catalysis. The segment at 275-279 is RNA binding; important for wobble base 34 recognition; sequence TRNAR. The Zn(2+) site is built by C308, C310, C313, and H339.

It belongs to the queuine tRNA-ribosyltransferase family. As to quaternary structure, homodimer. Within each dimer, one monomer is responsible for RNA recognition and catalysis, while the other monomer binds to the replacement base PreQ1. Requires Zn(2+) as cofactor.

The catalysed reaction is 7-aminomethyl-7-carbaguanine + guanosine(34) in tRNA = 7-aminomethyl-7-carbaguanosine(34) in tRNA + guanine. It participates in tRNA modification; tRNA-queuosine biosynthesis. Functionally, catalyzes the base-exchange of a guanine (G) residue with the queuine precursor 7-aminomethyl-7-deazaguanine (PreQ1) at position 34 (anticodon wobble position) in tRNAs with GU(N) anticodons (tRNA-Asp, -Asn, -His and -Tyr). Catalysis occurs through a double-displacement mechanism. The nucleophile active site attacks the C1' of nucleotide 34 to detach the guanine base from the RNA, forming a covalent enzyme-RNA intermediate. The proton acceptor active site deprotonates the incoming PreQ1, allowing a nucleophilic attack on the C1' of the ribose to form the product. After dissociation, two additional enzymatic reactions on the tRNA convert PreQ1 to queuine (Q), resulting in the hypermodified nucleoside queuosine (7-(((4,5-cis-dihydroxy-2-cyclopenten-1-yl)amino)methyl)-7-deazaguanosine). This chain is Queuine tRNA-ribosyltransferase, found in Campylobacter jejuni subsp. jejuni serotype O:23/36 (strain 81-176).